The sequence spans 488 residues: Cobyric acid synthase (488 aa).

Residues 252 to 442 enclose the GATase cobBQ-type domain; sequence RTRICVPILP…VHGLFASDAF (191 aa). The active-site Nucleophile is the cysteine 334. Histidine 434 is a catalytic residue.

This sequence belongs to the CobB/CobQ family. CobQ subfamily.

Its pathway is cofactor biosynthesis; adenosylcobalamin biosynthesis. In terms of biological role, catalyzes amidations at positions B, D, E, and G on adenosylcobyrinic A,C-diamide. NH(2) groups are provided by glutamine, and one molecule of ATP is hydrogenolyzed for each amidation. The chain is Cobyric acid synthase from Xanthobacter autotrophicus (strain ATCC BAA-1158 / Py2).